The sequence spans 285 residues: Nucleotide-binding protein Cphy_0331 (285 aa).

ATP is bound at residue Gly8–Ser15. GTP is bound at residue Asp59 to Ser62.

Belongs to the RapZ-like family.

In terms of biological role, displays ATPase and GTPase activities. In Lachnoclostridium phytofermentans (strain ATCC 700394 / DSM 18823 / ISDg) (Clostridium phytofermentans), this protein is Nucleotide-binding protein Cphy_0331.